A 327-amino-acid chain; its full sequence is GTP 3',8-cyclase (327 aa).

A Radical SAM core domain is found at Ala4 to Arg226. Arg13 is a GTP binding site. Cys20 and Cys24 together coordinate [4Fe-4S] cluster. Tyr26 contributes to the S-adenosyl-L-methionine binding site. Cys27 serves as a coordination point for [4Fe-4S] cluster. GTP is bound at residue Arg63. Gly67 provides a ligand contact to S-adenosyl-L-methionine. Thr94 serves as a coordination point for GTP. Residue Ser118 participates in S-adenosyl-L-methionine binding. A GTP-binding site is contributed by Lys155. Position 189 (Met189) interacts with S-adenosyl-L-methionine. [4Fe-4S] cluster is bound by residues Cys254 and Cys257. A GTP-binding site is contributed by Arg259 to Arg261. Residue Cys271 participates in [4Fe-4S] cluster binding.

Belongs to the radical SAM superfamily. MoaA family. As to quaternary structure, monomer and homodimer. It depends on [4Fe-4S] cluster as a cofactor.

The catalysed reaction is GTP + AH2 + S-adenosyl-L-methionine = (8S)-3',8-cyclo-7,8-dihydroguanosine 5'-triphosphate + 5'-deoxyadenosine + L-methionine + A + H(+). The protein operates within cofactor biosynthesis; molybdopterin biosynthesis. In terms of biological role, catalyzes the cyclization of GTP to (8S)-3',8-cyclo-7,8-dihydroguanosine 5'-triphosphate. The protein is GTP 3',8-cyclase of Heliobacterium modesticaldum (strain ATCC 51547 / Ice1).